Consider the following 427-residue polypeptide: Tol-Pal system protein TolB (427 aa).

The N-terminal stretch at 1–23 is a signal peptide; it reads MKLLKRLVSVFAIVLAVGSNAFA.

The protein belongs to the TolB family. The Tol-Pal system is composed of five core proteins: the inner membrane proteins TolA, TolQ and TolR, the periplasmic protein TolB and the outer membrane protein Pal. They form a network linking the inner and outer membranes and the peptidoglycan layer.

It is found in the periplasm. Its function is as follows. Part of the Tol-Pal system, which plays a role in outer membrane invagination during cell division and is important for maintaining outer membrane integrity. This chain is Tol-Pal system protein TolB, found in Haemophilus influenzae (strain PittGG).